A 210-amino-acid chain; its full sequence is Probable GTP-binding protein EngB (210 aa).

Residues 25-199 (TGIEVAFAGR…RQKLDSWFNE (175 aa)) form the EngB-type G domain. Residues 33–40 (GRSNAGKS), 60–64 (GRTQL), 78–81 (DLPG), 145–148 (TKAD), and 178–180 (FSS) contribute to the GTP site. Mg(2+)-binding residues include Ser40 and Thr62.

This sequence belongs to the TRAFAC class TrmE-Era-EngA-EngB-Septin-like GTPase superfamily. EngB GTPase family. The cofactor is Mg(2+).

Necessary for normal cell division and for the maintenance of normal septation. The chain is Probable GTP-binding protein EngB from Klebsiella pneumoniae subsp. pneumoniae (strain ATCC 700721 / MGH 78578).